Reading from the N-terminus, the 505-residue chain is Aspartyl/glutamyl-tRNA(Asn/Gln) amidotransferase subunit B (505 aa).

Positions 220-241 (NVSLRPRPAPGDPDAPFGTRSE) are disordered.

The protein belongs to the GatB/GatE family. GatB subfamily. Heterotrimer of A, B and C subunits.

The enzyme catalyses L-glutamyl-tRNA(Gln) + L-glutamine + ATP + H2O = L-glutaminyl-tRNA(Gln) + L-glutamate + ADP + phosphate + H(+). The catalysed reaction is L-aspartyl-tRNA(Asn) + L-glutamine + ATP + H2O = L-asparaginyl-tRNA(Asn) + L-glutamate + ADP + phosphate + 2 H(+). Its function is as follows. Allows the formation of correctly charged Asn-tRNA(Asn) or Gln-tRNA(Gln) through the transamidation of misacylated Asp-tRNA(Asn) or Glu-tRNA(Gln) in organisms which lack either or both of asparaginyl-tRNA or glutaminyl-tRNA synthetases. The reaction takes place in the presence of glutamine and ATP through an activated phospho-Asp-tRNA(Asn) or phospho-Glu-tRNA(Gln). This chain is Aspartyl/glutamyl-tRNA(Asn/Gln) amidotransferase subunit B, found in Frankia casuarinae (strain DSM 45818 / CECT 9043 / HFP020203 / CcI3).